The chain runs to 355 residues: MRWSEFLQHLEAKTGPCTAKAIAGDPELHGVAAINEAQSGQVSFLDQESGLQDWIEQTAASALILPPDPALQARAEARNLPWMTTAQPRLAFAAAIAVFYQPFRPVAGIHPSAVIDPSAQLGDRVSVGAHVVIGANCVIGNDVILHANVVLYPGVSLGDRCQIHANSTIHERSQIGQDCVIHSGAVIGAEGFGFVPTASGWFKMEQSGIVVLEDGVEVGCNSAIDRPAVGETRIGAQTKLDNLVHIGHGCQIGKACAMAAQVGLAGGVEVGDRVILAGQVGVANRVKIGDRAIASSKSGIHGEIEAGAIVSGYPAIPNRQWLKTSAVYNRLPELYRSLRNLIRRVEVLEQDRPSS.

The active-site Proton acceptor is the His248.

It belongs to the transferase hexapeptide repeat family. LpxD subfamily. Homotrimer.

It catalyses the reaction a UDP-3-O-[(3R)-3-hydroxyacyl]-alpha-D-glucosamine + a (3R)-hydroxyacyl-[ACP] = a UDP-2-N,3-O-bis[(3R)-3-hydroxyacyl]-alpha-D-glucosamine + holo-[ACP] + H(+). Its pathway is bacterial outer membrane biogenesis; LPS lipid A biosynthesis. In terms of biological role, catalyzes the N-acylation of UDP-3-O-acylglucosamine using 3-hydroxyacyl-ACP as the acyl donor. Is involved in the biosynthesis of lipid A, a phosphorylated glycolipid that anchors the lipopolysaccharide to the outer membrane of the cell. This Synechococcus elongatus (strain ATCC 33912 / PCC 7942 / FACHB-805) (Anacystis nidulans R2) protein is UDP-3-O-acylglucosamine N-acyltransferase.